The sequence spans 48 residues: U-actitoxin-Cgg3 (48 aa).

3 cysteine pairs are disulfide-bonded: Cys-5–Cys-41, Cys-7–Cys-33, and Cys-23–Cys-42. Ser-46 carries the post-translational modification Serine amide. Residues 47 to 48 (GR) constitute a propeptide, removed in mature form.

The protein belongs to the sea anemone type 3 (BDS) potassium channel toxin family.

Its subcellular location is the secreted. Its function is as follows. Neurotoxin that induces paralysis when injected into crabs. May function in antimicrobial activity as it displays inhibitory activity towards the B.licheniformis enzyme subtilisin A (SUBTA) and the recombinant S.maltophilia protease 1 (rStmPr1) enzyme. Also displays inhibitory activity against various proteases including the porcine pancreatic elastase (PPE) and proteinase K (PK). In Condylactis gigantea (Giant Caribbean anemone), this protein is U-actitoxin-Cgg3.